Reading from the N-terminus, the 50-residue chain is Apoptotic protease-activating factor 1 (50 aa).

One can recognise a CARD domain in the interval 1 to 31; the sequence is ILKKDNYSYISFYNALIHEGYKDLAALLHSG. In terms of domain architecture, NB-ARC spans 46–50; that stretch reads GGITS.

In terms of assembly, monomer. Oligomerizes to a heptameric ring, known as the apoptosome, upon binding of cytochrome c and dATP. Oligomeric Apaf-1 and pro-caspase-9 bind to each other via their respective NH2-terminal CARD domains and consecutively mature caspase-9 is released from the complex. Interacts with APIP. Interacts (via CARD and NACHT domains) with NAIP/BIRC1 (via NACHT domain). Interacts with CIAO2A.

Its function is as follows. Oligomeric Apaf-1 mediates the cytochrome c-dependent autocatalytic activation of pro-caspase 9 (Apaf-3), leading to the activation of caspase-3 and apoptosis. This activation requires ATP. This chain is Apoptotic protease-activating factor 1 (APAF1), found in Canis lupus familiaris (Dog).